The chain runs to 903 residues: Ras and Rab interactor 2 (903 aa).

The segment at 44-73 (NGLEPSETHSMVRHKDGGYSEDKDGKTCPR) is disordered. Over residues 56-73 (RHKDGGYSEDKDGKTCPR) the composition is skewed to basic and acidic residues. The 94-residue stretch at 97-190 (WLQLSLSEEE…VLPFTLKLPY (94 aa)) folds into the SH2 domain. Disordered stretches follow at residues 282-455 (QDLS…EFDR) and 471-491 (EDYE…SKKK). Residues 306–315 (SPPPRPPPPA) are compositionally biased toward pro residues. Over residues 318-338 (SLHTSPGLSRTEPQTSMPETV) the composition is skewed to polar residues. The residue at position 366 (Ser-366) is a Phosphoserine. Pro residues predominate over residues 419–431 (APPPGSESQPPPC). A compositionally biased stretch (low complexity) spans 439–450 (SDMSLSTSSSDS). An interaction with RAB5B region spans residues 506 to 775 (LRKMSGVFSS…ARLLSSEARD (270 aa)). Phosphoserine is present on Ser-510. At Thr-518 the chain carries Phosphothreonine. The VPS9 domain maps to 627–766 (DGSWKQLKEN…IKNFQEEQAA (140 aa)). One can recognise a Ras-associating domain in the interval 796-887 (FQNYLRVAFQ…FHFVYKRIKS (92 aa)).

This sequence belongs to the RIN (Ras interaction/interference) family. In terms of assembly, homotetramer; probably composed of anti-parallel linkage of two parallel dimers. Interacts with Ras. Interacts with RAB5B, with a much higher affinity for GTP-bound activated RAB5B. Does not interact with other members of the Rab family.

The protein localises to the cytoplasm. Functionally, ras effector protein. May function as an upstream activator and/or downstream effector for RAB5B in endocytic pathway. May function as a guanine nucleotide exchange (GEF) of RAB5B, required for activating the RAB5 proteins by exchanging bound GDP for free GTP. In Mus musculus (Mouse), this protein is Ras and Rab interactor 2 (Rin2).